A 354-amino-acid polypeptide reads, in one-letter code: Ribosomal RNA large subunit methyltransferase M (354 aa).

S-adenosyl-L-methionine is bound by residues serine 183, 216–219 (SPGG), aspartate 235, aspartate 255, and aspartate 271. Lysine 300 serves as the catalytic Proton acceptor.

Belongs to the class I-like SAM-binding methyltransferase superfamily. RNA methyltransferase RlmE family. RlmM subfamily. As to quaternary structure, monomer.

It is found in the cytoplasm. The enzyme catalyses cytidine(2498) in 23S rRNA + S-adenosyl-L-methionine = 2'-O-methylcytidine(2498) in 23S rRNA + S-adenosyl-L-homocysteine + H(+). Functionally, catalyzes the 2'-O-methylation at nucleotide C2498 in 23S rRNA. The polypeptide is Ribosomal RNA large subunit methyltransferase M (Pseudomonas entomophila (strain L48)).